The following is a 598-amino-acid chain: Elongation factor 4 (598 aa).

The tr-type G domain maps to Ser-4–Lys-181. GTP-binding positions include Asp-16–Thr-21 and Asn-128–Asp-131.

It belongs to the TRAFAC class translation factor GTPase superfamily. Classic translation factor GTPase family. LepA subfamily.

Its subcellular location is the cell membrane. It carries out the reaction GTP + H2O = GDP + phosphate + H(+). In terms of biological role, required for accurate and efficient protein synthesis under certain stress conditions. May act as a fidelity factor of the translation reaction, by catalyzing a one-codon backward translocation of tRNAs on improperly translocated ribosomes. Back-translocation proceeds from a post-translocation (POST) complex to a pre-translocation (PRE) complex, thus giving elongation factor G a second chance to translocate the tRNAs correctly. Binds to ribosomes in a GTP-dependent manner. The sequence is that of Elongation factor 4 from Mycoplasma mobile (strain ATCC 43663 / 163K / NCTC 11711) (Mesomycoplasma mobile).